The following is a 274-amino-acid chain: Thiamine kinase (274 aa).

Belongs to the thiamine kinase family.

It catalyses the reaction thiamine + ATP = thiamine phosphate + ADP + H(+). Its pathway is cofactor biosynthesis; thiamine diphosphate biosynthesis; thiamine phosphate from thiamine: step 1/1. Catalyzes the ATP-dependent phosphorylation of thiamine to thiamine phosphate. Is involved in thiamine salvage. This is Thiamine kinase from Escherichia coli O17:K52:H18 (strain UMN026 / ExPEC).